Reading from the N-terminus, the 563-residue chain is Arginine--tRNA ligase (563 aa).

The short motif at 120 to 130 (PNIAKPFHVGH) is the 'HIGH' region element.

Belongs to the class-I aminoacyl-tRNA synthetase family. Monomer.

It is found in the cytoplasm. The catalysed reaction is tRNA(Arg) + L-arginine + ATP = L-arginyl-tRNA(Arg) + AMP + diphosphate. This Clostridium acetobutylicum (strain ATCC 824 / DSM 792 / JCM 1419 / IAM 19013 / LMG 5710 / NBRC 13948 / NRRL B-527 / VKM B-1787 / 2291 / W) protein is Arginine--tRNA ligase.